The chain runs to 360 residues: UDP-N-acetylglucosamine--N-acetylmuramyl-(pentapeptide) pyrophosphoryl-undecaprenol N-acetylglucosamine transferase (360 aa).

Residues 12 to 14 (TAG), Ser198, and Gln289 contribute to the UDP-N-acetyl-alpha-D-glucosamine site.

It belongs to the glycosyltransferase 28 family. MurG subfamily.

It localises to the cell membrane. It catalyses the reaction Mur2Ac(oyl-L-Ala-gamma-D-Glu-L-Lys-D-Ala-D-Ala)-di-trans,octa-cis-undecaprenyl diphosphate + UDP-N-acetyl-alpha-D-glucosamine = beta-D-GlcNAc-(1-&gt;4)-Mur2Ac(oyl-L-Ala-gamma-D-Glu-L-Lys-D-Ala-D-Ala)-di-trans,octa-cis-undecaprenyl diphosphate + UDP + H(+). It participates in cell wall biogenesis; peptidoglycan biosynthesis. Functionally, cell wall formation. Catalyzes the transfer of a GlcNAc subunit on undecaprenyl-pyrophosphoryl-MurNAc-pentapeptide (lipid intermediate I) to form undecaprenyl-pyrophosphoryl-MurNAc-(pentapeptide)GlcNAc (lipid intermediate II). This Streptococcus equi subsp. zooepidemicus (strain H70) protein is UDP-N-acetylglucosamine--N-acetylmuramyl-(pentapeptide) pyrophosphoryl-undecaprenol N-acetylglucosamine transferase.